A 73-amino-acid polypeptide reads, in one-letter code: Probable minor pilin MMP0528 (73 aa).

A propeptide spanning residues 1-10 (MLKKLYSKKG) is cleaved from the precursor. The short motif at 11–19 (QVSMEMGIL) is the QXSXEXXXL element.

The N-terminus is probably cleaved by the prepilin peptidase EppA, which recognizes the class III signal sequence.

Its subcellular location is the secreted. It localises to the cell surface. The protein resides in the fimbrium. The polypeptide is Probable minor pilin MMP0528 (Methanococcus maripaludis (strain DSM 14266 / JCM 13030 / NBRC 101832 / S2 / LL)).